Here is a 590-residue protein sequence, read N- to C-terminus: Glypican-3 (590 aa).

The first 25 residues, 1-25 (MMPGLKLYGALILCVLVLPFSRPSS), serve as a signal peptide directing secretion. 7 cysteine pairs are disulfide-bonded: Cys-30–Cys-67, Cys-60–Cys-255, Cys-68–Cys-258, Cys-190–Cys-342, Cys-245–Cys-278, Cys-267–Cys-418, and Cys-271–Cys-406. Asn-119 and Asn-234 each carry an N-linked (GlcNAc...) asparagine glycan. A glycan (N-linked (GlcNAc...) asparagine) is linked at Asn-414. Disordered stretches follow at residues 429-450 (PGPGLKRVHPHGSESKQKTPEP) and 476-520 (WRAR…SGLG). A compositionally biased stretch (acidic residues) spans 495-513 (TDEDEEGLESGDCDDEDEC). Ser-504 and Ser-517 each carry an O-linked (Xyl...) (glycosaminoglycan) serine glycan.

The protein belongs to the glypican family. As to quaternary structure, heterodimer; disulfide-linked. Cleavage by a furin-like convertase results in production of alpha and beta chains which form a disulfide-linked heterodimer. Post-translationally, O-glycosylated; contains heparan sulfate and/or chondroitin sulfate. Cleaved intracellularly by a furin-like convertase to generate 2 subunits, alpha and beta, which remain associated through disulfide bonds and are associated with the cell surface via the GPI-anchor. This processing is essential for its role in inhibition of hedgehog signaling. A second proteolytic event may result in cleavage of the protein on the cell surface, separating it from the GPI-anchor and leading to its shedding from the cell surface. In terms of tissue distribution, maternally expressed and is almost ubiquitous during blastula and gastrula stages but becomes restricted to the prospective hindbrain by 24 hours post-fertilization.

The protein localises to the cell membrane. In terms of biological role, cell surface proteoglycan. Negatively regulates the hedgehog signaling pathway. Positively regulates the canonical and non-canonical Wnt signaling pathways. Binds to CD81 which decreases the availability of free CD81 for binding to the transcriptional repressor HHEX, resulting in nuclear translocation of HHEX and transcriptional repression. Inhibits the dipeptidyl peptidase activity of DPP4. Plays a role in limb patterning and skeletal development. Modulates the effects of growth factors on renal branching morphogenesis. Required for coronary vascular development. Plays a role in regulating cell movements during gastrulation. This is Glypican-3 from Danio rerio (Zebrafish).